The following is a 1035-amino-acid chain: NACHT, LRR and PYD domains-containing protein 3 (1035 aa).

Positions 1 to 93 (MKMMSVRCKL…WEKAKKDQPE (93 aa)) constitute a Pyrin domain. Phosphoserine is present on Ser5. Cys8 and Cys106 form a disulfide bridge. The residue at position 13 (Tyr13) is a Phosphotyrosine. A lipid anchor (S-palmitoyl cysteine) is attached at Cys128. Residues 129–132 (KKKK) form a required for binding to phosphatidylinositol 4-phosphate (PtdIns4P) region. Phosphotyrosine is present on residues Tyr134 and Tyr138. Positions 138–208 (YRRHVRSRFY…SSLKLELLFE (71 aa)) constitute an FISNA domain. The residue at position 159 (Ser159) is a Phosphoserine. A Phosphotyrosine modification is found at Tyr166. Thr167 provides a ligand contact to ATP. At Ser199 the chain carries Phosphoserine. An NACHT domain is found at 218 to 534 (HTVVFQGAAG…EFFAAMYYLL (317 aa)). Residue 224 to 231 (GAAGIGKT) participates in ATP binding. Residues Ser263 and Ser293 each carry the phosphoserine modification. Lys322 participates in a covalent cross-link: Glycyl lysine isopeptide (Lys-Gly) (interchain with G-Cter in ubiquitin). Ser332 carries the post-translational modification Phosphoserine. The KFERQ-like motif 1 signature appears at 353 to 357 (LEKLQ). Residue Lys428 forms a Glycyl lysine isopeptide (Lys-Gly) (interchain with G-Cter in ubiquitin) linkage. His520 is an ATP binding site. The short motif at 603–607 (QVRLE) is the KFERQ-like motif 2 element. Residue Lys689 forms a Glycyl lysine isopeptide (Lys-Gly) (interchain with G-Cter in ubiquitin) linkage. Phosphoserine is present on residues Ser727 and Ser734. LRR repeat units follow at residues 741–761 (SLTELDLSDNTLGDPGMRVLC), 770–791 (NIQRLWLGRCGLTHQCCFNISS), 798–818 (KLVELDLSDNALGDFGVRLLC), 827–848 (NLQKLWLVSCCLTSACCQDLAL), and 855–875 (SLTRLYIGENALGDSGVQVLC). The short motif at 797–801 (QKLVE) is the KFERQ-like motif 3 element. At Ser805 the chain carries Phosphoserine. S-palmitoyl cysteine attachment occurs at residues Cys836, Cys837, and Cys843. At Tyr860 the chain carries Phosphotyrosine. Lys877 is covalently cross-linked (Glycyl lysine isopeptide (Lys-Gly) (interchain with G-Cter in ubiquitin)). LRR repeat units follow at residues 884–905 (NLQKLGLVNSGLTSLCCSALTS), 912–932 (NLTHLYLRSNALGDMGLKLLC), 941–962 (KLQMLELDNCSLTSHSCWDLST), and 969–990 (SLRKLNLSNNDLGDLCVVTLCE). Cys957 carries S-palmitoyl cysteine lipidation. Residue Lys972 forms a Glycyl lysine isopeptide (Lys-Gly) (interchain with G-Cter in ubiquitin) linkage. The KFERQ-like motif 4 motif lies at 990-994 (EVLKQ). At Ser1034 the chain carries Phosphoserine.

This sequence belongs to the NLRP family. Sensor component of NLRP3 inflammasomes; inflammasomes are supramolecular complexes that assemble in the cytosol in response to pathogens and other damage-associated signals and play critical roles in innate immunity and inflammation. The core of NLRP3 inflammasomes consists of a signal sensor component (NLRP3), an adapter (PYCARD/ASC), which recruits an effector pro-inflammatory caspase (CASP1 and, possibly, CASP4 and CASP5). Homodecamer; inactive NLRP3 forms homodecameric double-ring cages that hide pyrin domains within NACHT-LRR rings to avoid premature activation. Interacts (via pyrin domain) with PYCARD/ASC (via pyrin domain); interaction is direct. Interacts (via LRR repeat domain) with NEK7 (via N-terminus); the interaction is required for the formation of the complex NLRP3:PYCARD, oligomerization of PYCARD/ASC and activation of CASP1. Interacts (via LRR repeat domain) with NR4A1/Nur77 (via N-terminus); the interaction is direct, requires activation of NR4A1 by its ligands NBRE-containing dsDNA and lipopolysaccharide, and stimulates the association of NLRP3 with NEK7 for non-canonical NLRP3 inflammasome activation. Interacts with CARD8; leading to inhibit formation of the NLRP3 inflammasome. Interacts with MEFV; this interaction targets NLRP3 to degradation by autophagy, hence preventing excessive IL1B- and IL18-mediated inflammation. Interacts with EIF2AK2/PKR; this interaction requires EIF2AK2 activity, is accompanied by EIF2AK2 autophosphorylation and promotes inflammasome assembly in response to specific stimuli. Interacts with GBP5 (via DAPIN domain); this interaction promotes inflammasome assembly in response to microbial and soluble, but not crystalline, agents. Interacts with PML (isoform PML-1) (via the leucine-rich repeat (LRR) domain); PML-mediated increase in NLRP3 inflammasome activation does not depend upon this interaction. Interacts (via NACHT domain) with DHX33 (via DEAH box); NLRP3 activation in presence of cytosolic dsRNA is mediated by DHX33. Interacts (via NACHT and LRR domains) with ARRB2; this interaction is direct and inducible by polyunsaturated fatty acids (PUFAs). Interacts (via NACHT domain) with DDX3X under both LPS-primed and inflammasome-activating conditions. Interacts with IRF4 (via the LRR domain); this interaction is direct and is required for optimal IRF4 binding to IL4 promoter and efficient IL4 transactivation during differentiation of Th2 helper T-cells. Interacts with MAVS; promoting localization to mitochondria and activation of the NLRP3 inflammasome. Interacts with MARK4; promoting localization of NLRP3 to the microtubule organizing center (MTOC). Interacts with TRIM50; this interaction also promotes NLRP3 oligomerization and subsequent inflammasome activation. Interacts with IRGM; preventing NLRP3 inflammasome assembly and promoting NLRP3 degradation. Interacts (via NACHT and LLR domains) with ABHD8; this interaction is enhanced in the presence of NLRP3 inflammasome inducers, such as ATP, nigericin, silica, or alum. Interaction with ABHD8 leads the recruitment of ZDHHC12, hence facilitating NLRP3 palmitoylation and degradation by the chaperone-mediated autophagy pathway (CMA), therefore attenuating NLRP3 inflammasome activation. In terms of processing, phosphorylation by MAPK8/JNK1 increases inflammasome activation by promoting deubiquitination by BRCC3 and NLRP3 homooligomerization. Phosphorylation at Ser-805 by CSNK1A1 prevents inflammasome activation by preventing NEK7 recruitment. Phosphorylation at Ser-5 in the pyrin domain inhibits homomultimerization of NLRP3 and activation of the NLRP3 inflammasome: dephosphorylation by protein phosphatase 2A (PP2A) promotes assembly of the NLRP3 inflammasome. Phosphorylation at Ser-293 by PKD/PRKD1 promotes NLRP3 inflammasome assembly. Phosphorylation by ERK1/MAPK3 promotes NLRP3 inflammasome assembly. Phosphorylation by BTK (at Tyr-134, Tyr-138 and Tyr-166) in the region that mediates binding to phosphatidylinositol phosphate, promotes relocalization of NLRP3 and assembly of the NLRP3 inflammasome. Phosphorylation at Tyr-860 inhibits NLRP3 inflammasome assembly: dephosphorylation by PTPN22 promotes inflammasome activation. Phosphorylated by LATS1 and LATS2 at Ser-263 following palmitoylation by ZDHHC1, promoting its relocalization to the microtubule organizing center (MTOC), where NLRP3 is activated by NEK7, leading to inflammasome assembly and activation. Post-translationally, ubiquitinated; undergoes both 'Lys-48'- and 'Lys-63'-linked polyubiquitination. Ubiquitination does not lead to degradation, but inhibits inflammasome activation. Deubiquitination is catalyzed by BRCC3 and associated with NLRP3 activation and inflammasome assembly. This process can be induced by the activation of Toll-like receptors (by LPS), through a non-transcriptional pathway dependent on the mitochondrial production of reactive oxygen species, and by ATP. Ubiquitinated by TRIM31 via 'Lys-48'-linked ubiquitination, leading to its degradation by the proteasome. Ubiquitinated at Lys-689 by the SCF(FBXL2) complex, leading to its degradation by the proteasome. Ubiquitinated by TRIM35 via 'lys-48' and 'Lys-63'-linked ubiquitination leading to inhibition of NLRP3 inflammasome activation. Undergoes 'Lys-27'-linked polyubiquitination by MARCHF5, leading to NLRP3-NEK7 complex formation and NLRP3 oligomerization. The disulfide bond in the pyrin domain might play a role in reactive oxygen species-mediated activation. In terms of processing, palmitoylation by ZDHHC12 promotes NLRP3 degradation by the chaperone-mediated autophagy pathway (CMA) and therefore limits NLRP3 inflammasome activation. Interaction with ZDHHC12, and hence NLRP3 palmitoylation, is greatly enhanced by ABHD8. Following palmitoylation, HSPA8/HSC70 recognizes and binds the KFERQ-like motifs on NLRP3 and promotes NLRP3 recruitment to lysosomes, where it is degraded via the chaperone-mediated autophagy pathway in a LAMP2-dependent process. Palmitoylation at Cys-836 and Cys-837 by ZDHHC5 enhances its binding to NEK7 leading to inflammasome assembly and activation. Palmitoylation at Cys-128 and Cys-957 by ZDHHC1 facilitates phosphorylation at Ser-263 by LATS1 and LATS2, promoting its relocalization to the microtubule organizing center (MTOC), where NLRP3 is activated by NEK7, leading to inflammasome assembly and activation. Depalmitoylated by ABHD17A. Post-translationally, degraded via selective autophagy following interaction with IRGM. IRGM promotes NLRP3 recruitment to autophagosome membranes, promoting its SQSTM1/p62-dependent autophagy-dependent degradation.

Its subcellular location is the cytoplasm. It localises to the cytosol. The protein resides in the inflammasome. The protein localises to the cytoskeleton. It is found in the microtubule organizing center. Its subcellular location is the golgi apparatus membrane. It localises to the endoplasmic reticulum. The protein resides in the mitochondrion. The protein localises to the secreted. It is found in the nucleus. The catalysed reaction is ATP + H2O = ADP + phosphate + H(+). Its activity is regulated as follows. Under resting conditions, NLRP3 binds ADP and is autoinhibited. Inactive NLRP3 forms homodecameric double-ring cages that hide pyrin domains within NACHT-LRR rings to avoid premature activation. NLRP3 activation stimuli include extracellular ATP, nigericin, reactive oxygen species, crystals of monosodium urate or cholesterol, amyloid-beta fibers, environmental or industrial particles and nanoparticles, such as asbestos, silica, aluminum salts, cytosolic dsRNA, etc. Almost all stimuli trigger intracellular K(+) efflux. These stimuli lead to membrane perturbations that induce activation of NLRP3. Upon activation, NLRP3 is transported to microtubule organizing center (MTOC), where it is unlocked by NEK7, leading to its relocalization to dispersed trans-Golgi network (dTGN) vesicle membranes and recruitment of PYCARD/ASC for the formation of an active inflammasome complex. NEK7-activated NLRP3 forms a disk-shaped inflammasome. NLRP3 and PYCARD/ASC interact via their respective pyrin domains; interaction initiates speck formation (nucleation) which greatly enhances further addition of soluble PYCARD/ASC molecules to the speck in a prion-like polymerization process. Clustered PYCARD/ASC nucleates the formation of CASP1 filaments through the interaction of their respective CARD domains, acting as a platform for CASP1 polymerization and activation. Active CASP1 then processes IL1B and IL18 precursors, leading to the release of mature cytokines in the extracellular milieu and inflammatory response. NLRP3 inflammasome assembly is inhibited by IRGM, which impedes NLRP3 oligomerization. NLRP3 inflammasome is inhibited by cyclic AMP (cAMP), which directly binds NLRP3; inhibition is relieved by calcium-sensing receptor CASR, which inhibits production of cAMP. Specifically inhibited by sulfonylurea MCC950 (also named CP-456,773, CRID3), a potent and specific small-molecule inhibitor of the NLRP3 inflammasome that acts by preventing ATP hydrolysis. In terms of biological role, sensor component of the NLRP3 inflammasome, which mediates inflammasome activation in response to defects in membrane integrity, leading to secretion of inflammatory cytokines IL1B and IL18 and pyroptosis. In response to pathogens and other damage-associated signals that affect the integrity of membranes, initiates the formation of the inflammasome polymeric complex composed of NLRP3, CASP1 and PYCARD/ASC. Recruitment of pro-caspase-1 (proCASP1) to the NLRP3 inflammasome promotes caspase-1 (CASP1) activation, which subsequently cleaves and activates inflammatory cytokines IL1B and IL18 and gasdermin-D (GSDMD), promoting cytokine secretion and pyroptosis. Activation of NLRP3 inflammasome is also required for HMGB1 secretion; stimulating inflammatory responses. Under resting conditions, ADP-bound NLRP3 is autoinhibited. NLRP3 activation stimuli include extracellular ATP, nigericin, reactive oxygen species, crystals of monosodium urate or cholesterol, amyloid-beta fibers, environmental or industrial particles and nanoparticles, such as asbestos, silica, aluminum salts, cytosolic dsRNA, etc. Almost all stimuli trigger intracellular K(+) efflux. These stimuli lead to membrane perturbation and activation of NLRP3. Upon activation, NLRP3 is transported to microtubule organizing center (MTOC), where it is unlocked by NEK7, leading to its relocalization to dispersed trans-Golgi network (dTGN) vesicle membranes and formation of an active inflammasome complex. Associates with dTGN vesicle membranes by binding to phosphatidylinositol 4-phosphate (PtdIns4P). Shows ATPase activity. Functionally, independently of inflammasome activation, regulates the differentiation of T helper 2 (Th2) cells and has a role in Th2 cell-dependent asthma and tumor growth. During Th2 differentiation, required for optimal IRF4 binding to IL4 promoter and for IRF4-dependent IL4 transcription. Binds to the consensus DNA sequence 5'-GRRGGNRGAG-3'. May also participate in the transcription of IL5, IL13, GATA3, CCR3, CCR4 and MAF. This is NACHT, LRR and PYD domains-containing protein 3 from Rattus norvegicus (Rat).